The chain runs to 562 residues: Tetratricopeptide repeat protein 39A (562 aa).

3 TPR repeats span residues 273-306 (AIFL…QQNW), 463-496 (CVVK…EKRI), and 504-537 (PNAM…YKNY).

This sequence belongs to the TTC39 family.

The sequence is that of Tetratricopeptide repeat protein 39A (ttc39a) from Xenopus tropicalis (Western clawed frog).